The primary structure comprises 219 residues: uncharacterized protein (219 aa).

Residues Met-1 to Arg-15 are Cytoplasmic-facing. A helical transmembrane segment spans residues Tyr-16 to Asn-36. Residues Tyr-37–Arg-41 are Vacuolar-facing. The chain crosses the membrane as a helical span at residues Ile-42 to Phe-62. Leu-63 is a topological domain (cytoplasmic). Residues Pro-64–Val-84 form a helical membrane-spanning segment. At Thr-85–Asp-116 the chain is on the vacuolar side. Residues Ile-117–Thr-137 traverse the membrane as a helical segment. The Cytoplasmic segment spans residues Val-138–Ser-219. Residues Pro-176 to Ser-219 are disordered. The span at Glu-191–Ala-203 shows a compositional bias: acidic residues. Residues Glu-206–Ser-219 show a composition bias toward basic and acidic residues.

The protein resides in the vacuole membrane. This is an uncharacterized protein from Saccharomyces cerevisiae (strain ATCC 204508 / S288c) (Baker's yeast).